The chain runs to 106 residues: UPF0091 protein RP266 (106 aa).

It belongs to the UPF0091 family.

The sequence is that of UPF0091 protein RP266 from Rickettsia prowazekii (strain Madrid E).